Consider the following 183-residue polypeptide: Large ribosomal subunit protein uL5 (183 aa).

It belongs to the universal ribosomal protein uL5 family. In terms of assembly, part of the 50S ribosomal subunit; part of the 5S rRNA/L5/L18/L25 subcomplex. Contacts the 5S rRNA and the P site tRNA. Forms a bridge to the 30S subunit in the 70S ribosome.

In terms of biological role, this is one of the proteins that bind and probably mediate the attachment of the 5S RNA into the large ribosomal subunit, where it forms part of the central protuberance. In the 70S ribosome it contacts protein S13 of the 30S subunit (bridge B1b), connecting the 2 subunits; this bridge is implicated in subunit movement. Contacts the P site tRNA; the 5S rRNA and some of its associated proteins might help stabilize positioning of ribosome-bound tRNAs. This chain is Large ribosomal subunit protein uL5, found in Chlorobaculum tepidum (strain ATCC 49652 / DSM 12025 / NBRC 103806 / TLS) (Chlorobium tepidum).